Here is a 212-residue protein sequence, read N- to C-terminus: Large ribosomal subunit protein uL3 (212 aa).

Gln153 is modified (N5-methylglutamine).

Belongs to the universal ribosomal protein uL3 family. In terms of assembly, part of the 50S ribosomal subunit. Forms a cluster with proteins L14 and L19. In terms of processing, methylated by PrmB.

One of the primary rRNA binding proteins, it binds directly near the 3'-end of the 23S rRNA, where it nucleates assembly of the 50S subunit. This chain is Large ribosomal subunit protein uL3, found in Shewanella denitrificans (strain OS217 / ATCC BAA-1090 / DSM 15013).